The following is a 164-amino-acid chain: UPF0114 protein KPN78578_33570 (164 aa).

The next 4 membrane-spanning stretches (helical) occupy residues 15-35, 53-73, 109-126, and 136-156; these read LLAP…IKFF, MILT…LVMV, VAAS…RVFM, and LMWY…MGYL.

This sequence belongs to the UPF0114 family.

It localises to the cell membrane. This Klebsiella pneumoniae subsp. pneumoniae (strain ATCC 700721 / MGH 78578) protein is UPF0114 protein KPN78578_33570.